We begin with the raw amino-acid sequence, 166 residues long: Biotin carboxyl carrier protein of acetyl-CoA carboxylase (166 aa).

The segment covering S61 to A70 has biased composition (polar residues). Residues S61 to Q82 form a disordered region. The region spanning G90–K166 is the Biotinyl-binding domain. Position 132 is an N6-biotinyllysine (K132).

As to quaternary structure, homodimer.

The protein operates within lipid metabolism; fatty acid biosynthesis. Functionally, this protein is a component of the acetyl coenzyme A carboxylase complex; first, biotin carboxylase catalyzes the carboxylation of the carrier protein and then the transcarboxylase transfers the carboxyl group to form malonyl-CoA. This Streptococcus pyogenes serotype M6 (strain ATCC BAA-946 / MGAS10394) protein is Biotin carboxyl carrier protein of acetyl-CoA carboxylase.